The following is a 348-amino-acid chain: Phosphate acyltransferase (348 aa).

Belongs to the PlsX family. In terms of assembly, homodimer. Probably interacts with PlsY.

The protein localises to the cytoplasm. It carries out the reaction a fatty acyl-[ACP] + phosphate = an acyl phosphate + holo-[ACP]. The protein operates within lipid metabolism; phospholipid metabolism. Functionally, catalyzes the reversible formation of acyl-phosphate (acyl-PO(4)) from acyl-[acyl-carrier-protein] (acyl-ACP). This enzyme utilizes acyl-ACP as fatty acyl donor, but not acyl-CoA. The polypeptide is Phosphate acyltransferase (Synechocystis sp. (strain ATCC 27184 / PCC 6803 / Kazusa)).